A 72-amino-acid chain; its full sequence is Large ribosomal subunit protein bL31c (72 aa).

Belongs to the bacterial ribosomal protein bL31 family. Type A subfamily. Part of the 50S ribosomal subunit.

The protein resides in the plastid. It is found in the chloroplast. Binds the 23S rRNA. The sequence is that of Large ribosomal subunit protein bL31c (rpl31) from Phaeodactylum tricornutum (strain CCAP 1055/1).